The following is a 418-amino-acid chain: Putative competence-damage inducible protein (418 aa).

Belongs to the CinA family.

This Streptococcus pneumoniae (strain CGSP14) protein is Putative competence-damage inducible protein.